The sequence spans 172 residues: Small ribosomal subunit protein uS5 (172 aa).

Residues 16-79 form the S5 DRBM domain; that stretch reads LKDRLVAINR…ESAKKNLVKV (64 aa).

This sequence belongs to the universal ribosomal protein uS5 family. In terms of assembly, part of the 30S ribosomal subunit. Contacts proteins S4 and S8.

Its function is as follows. With S4 and S12 plays an important role in translational accuracy. Functionally, located at the back of the 30S subunit body where it stabilizes the conformation of the head with respect to the body. The chain is Small ribosomal subunit protein uS5 from Bacteroides thetaiotaomicron (strain ATCC 29148 / DSM 2079 / JCM 5827 / CCUG 10774 / NCTC 10582 / VPI-5482 / E50).